A 916-amino-acid chain; its full sequence is RNA-directed DNA polymerase from mobile element jockey (916 aa).

Residues 483-757 (SVLDVGYFPK…QAYKYLGITL (275 aa)) form the Reverse transcriptase domain.

Mg(2+) serves as cofactor. It depends on Mn(2+) as a cofactor.

The catalysed reaction is DNA(n) + a 2'-deoxyribonucleoside 5'-triphosphate = DNA(n+1) + diphosphate. With respect to regulation, inactivated by sulphydryl reagent. The polypeptide is RNA-directed DNA polymerase from mobile element jockey (pol) (Drosophila melanogaster (Fruit fly)).